The chain runs to 50 residues: Bacterioferritin (50 aa).

The 50-residue stretch at 1–50 (MKGDPKVIDYLNKALRHELTAINQYWLHYRLLDNWGIKDLAKKWRAESIE) folds into the Ferritin-like diiron domain. E18 provides a ligand contact to Fe cation.

It belongs to the bacterioferritin family. As to quaternary structure, homooligomer of 24 subunits, arranged as 12 dimers, that are packed together to form an approximately spherical molecule with a central cavity, in which large amounts of iron can be deposited. Heme b serves as cofactor.

It catalyses the reaction 4 Fe(2+) + O2 + 4 H(+) = 4 Fe(3+) + 2 H2O. The enzyme catalyses Fe(2+)(in) = Fe(2+)(out). Functionally, iron-storage protein, whose ferroxidase center binds Fe(2+), oxidizes it using dioxygen to Fe(3+), and participates in the subsequent Fe(3+) oxide mineral core formation within the central cavity of the BFR protein shell. Its function is as follows. May act as one of the electron carriers in the reverse electron-transport system from cytochrome c-552 to NADP(+). The chain is Bacterioferritin (bfr) from Nitrobacter winogradskyi (Nitrobacter agilis).